Here is a 661-residue protein sequence, read N- to C-terminus: Peroxisomal acyl-coenzyme A oxidase 1 (661 aa).

Phosphoserine is present on serine 26. Lysine 65 is subject to N6-acetyllysine. N6-succinyllysine occurs at positions 89 and 90. Threonine 139 contributes to the FAD binding site. Lysine 159 carries the N6-succinyllysine modification. Glycine 178 contacts FAD. Lysine 216 carries the N6-acetyllysine modification. An N6-succinyllysine modification is found at lysine 241. N6-acetyllysine occurs at positions 255, 267, and 272. An N6-succinyllysine modification is found at lysine 349. Glutamate 421 acts as the Proton acceptor in catalysis. N6-acetyllysine; alternate is present on residues lysine 437 and lysine 446. Lysine 437 and lysine 446 each carry N6-succinyllysine; alternate. Lysine 500 bears the N6-acetyllysine mark. Position 512 is an N6-acetyllysine; alternate (lysine 512). At lysine 512 the chain carries N6-succinyllysine; alternate. Lysine 542 carries the N6-succinyllysine modification. Lysine 637 is modified (N6-acetyllysine; alternate). The residue at position 637 (lysine 637) is an N6-succinyllysine; alternate. Residue lysine 643 is modified to N6-succinyllysine. Serine 649 bears the Phosphoserine mark. Lysine 652 carries the post-translational modification N6-acetyllysine. N6-succinyllysine is present on lysine 655. The Microbody targeting signal motif lies at 659–661 (SKL).

Belongs to the acyl-CoA oxidase family. As to quaternary structure, homodimer. The enzyme contains three components A, B and C, the latter two being produced from the first by a proteolytic cleavage. Interacts with LONP2. The cofactor is FAD. In terms of tissue distribution, expressed in Schwann cells. Expressed (at protein level) in liver.

It is found in the peroxisome. The catalysed reaction is a 2,3-saturated acyl-CoA + O2 = a (2E)-enoyl-CoA + H2O2. It carries out the reaction hexadecanoyl-CoA + O2 = (2E)-hexadecenoyl-CoA + H2O2. The enzyme catalyses dodecanoyl-CoA + O2 = (2E)-dodecenoyl-CoA + H2O2. It catalyses the reaction octanoyl-CoA + O2 = (2E)-octenoyl-CoA + H2O2. The catalysed reaction is decanoyl-CoA + O2 = (2E)-decenoyl-CoA + H2O2. It carries out the reaction tetradecanoyl-CoA + O2 = (2E)-tetradecenoyl-CoA + H2O2. The enzyme catalyses hexadecanedioyl-CoA + O2 = (2E)-hexadecenedioyl-CoA + H2O2. It catalyses the reaction tetracosanoyl-CoA + O2 = (2E)-tetracosenoyl-CoA + H2O2. The catalysed reaction is glutaryl-CoA + O2 = (2E)-glutaconyl-CoA + H2O2. It carries out the reaction hexanoyl-CoA + O2 = (2E)-hexenoyl-CoA + H2O2. The enzyme catalyses octadecanoyl-CoA + O2 = (2E)-octadecenoyl-CoA + H2O2. It catalyses the reaction (5Z,8Z,11Z,14Z,17Z)-eicosapentaenoyl-CoA + O2 = (2E,5Z,8Z,11Z,14Z,17Z)-icosahexaenoyl-CoA + H2O2. The catalysed reaction is (6Z,9Z,12Z,15Z,18Z,21Z)-tetracosahexaenoyl-CoA + O2 = (2E,6Z,9Z,12Z,15Z,18Z,21Z)-tetracosaheptaenoyl-CoA + H2O2. Its pathway is lipid metabolism; peroxisomal fatty acid beta-oxidation. Functionally, involved in the initial and rate-limiting step of peroxisomal beta-oxidation of straight-chain saturated and unsaturated very-long-chain fatty acids. Catalyzes the desaturation of fatty acyl-CoAs such as palmitoyl-CoA (hexadecanoyl-CoA) to 2-trans-enoyl-CoAs ((2E)-enoyl-CoAs) such as (2E)-hexadecenoyl-CoA, and donates electrons directly to molecular oxygen (O(2)), thereby producing hydrogen peroxide (H(2)O(2)). Shows highest activity against medium-chain fatty acyl-CoAs. Shows optimum activity with a chain length of 10 carbons (decanoyl-CoA) in vitro. In terms of biological role, is active against a much broader range of substrates and shows activity towards long-chain acyl-CoAs. This Rattus norvegicus (Rat) protein is Peroxisomal acyl-coenzyme A oxidase 1.